The following is a 171-amino-acid chain: Orotate phosphoribosyltransferase (171 aa).

5-phospho-alpha-D-ribose 1-diphosphate is bound by residues Arg-85, Lys-86, Arg-88, His-90, and 110 to 118; that span reads EDVVTTGNS. The orotate site is built by Thr-114 and Arg-142.

It belongs to the purine/pyrimidine phosphoribosyltransferase family. PyrE subfamily. In terms of assembly, homodimer. It depends on Mg(2+) as a cofactor.

It carries out the reaction orotidine 5'-phosphate + diphosphate = orotate + 5-phospho-alpha-D-ribose 1-diphosphate. It functions in the pathway pyrimidine metabolism; UMP biosynthesis via de novo pathway; UMP from orotate: step 1/2. Its function is as follows. Catalyzes the transfer of a ribosyl phosphate group from 5-phosphoribose 1-diphosphate to orotate, leading to the formation of orotidine monophosphate (OMP). This is Orotate phosphoribosyltransferase from Thermoplasma acidophilum (strain ATCC 25905 / DSM 1728 / JCM 9062 / NBRC 15155 / AMRC-C165).